A 117-amino-acid polypeptide reads, in one-letter code: Non-specific lipid-transfer protein 1 (117 aa).

Residues 1-26 form the signal peptide; sequence MARAQVLLMAAALVLMLTAAPRAAVA. 4 disulfides stabilise this stretch: Cys29–Cys76, Cys39–Cys53, Cys54–Cys99, and Cys74–Cys113. Residue Asp33 is the site of Cis-14-hydroxy-10,13-dioxo-7-heptadecenoic acid aspartate ester attachment.

Belongs to the plant LTP family. As to expression, aleurone layer of developing and germinating seeds.

Plant non-specific lipid-transfer proteins transfer phospholipids as well as galactolipids across membranes. May play a role in wax or cutin deposition in the cell walls of expanding epidermal cells and certain secretory tissues. In Hordeum vulgare (Barley), this protein is Non-specific lipid-transfer protein 1 (LTP1).